Here is a 1419-residue protein sequence, read N- to C-terminus: Myosin-2B (1419 aa).

In terms of domain architecture, Myosin N-terminal SH3-like spans E4–A57. The Myosin motor domain occupies E75–S780. An ATP-binding site is contributed by G169–T176. Residues F451–E531 are actin-binding. IQ domains follow at residues V783–Q805, A806–M830, K831–T854, L855–F878, E879–T901, and L902–S931. The stretch at I909 to A940 forms a coiled coil. The tract at residues K1061–A1419 is non alpha-helical, tail domain. The Dilute domain occupies H1143–R1357.

This sequence belongs to the TRAFAC class myosin-kinesin ATPase superfamily. Myosin family. As to quaternary structure, homodimer. Interacts with calmodulin (CMD1) and the myosin light chain MLC1 through its IQ repeats.

Functionally, myosin heavy chain that is required for the cell cycle-regulated transport of various organelles and proteins for their segregation. Functions by binding with its tail domain to receptor proteins on organelles and exerting force with its N-terminal motor domain against actin filaments, thereby transporting its cargo along polarized actin cables. This Naumovozyma castellii (Yeast) protein is Myosin-2B (MYO2B).